Consider the following 203-residue polypeptide: Small ribosomal subunit protein uS4 (203 aa).

The region spanning Thr-92–Pro-164 is the S4 RNA-binding domain.

Belongs to the universal ribosomal protein uS4 family. As to quaternary structure, part of the 30S ribosomal subunit. Contacts protein S5. The interaction surface between S4 and S5 is involved in control of translational fidelity.

One of the primary rRNA binding proteins, it binds directly to 16S rRNA where it nucleates assembly of the body of the 30S subunit. Its function is as follows. With S5 and S12 plays an important role in translational accuracy. The polypeptide is Small ribosomal subunit protein uS4 (Opitutus terrae (strain DSM 11246 / JCM 15787 / PB90-1)).